The primary structure comprises 345 residues: Ryncolin-4 (345 aa).

Residues 1 to 19 (MKPWAAFHLIFLVASSLEG) form the signal peptide. The interval 48 to 118 (ILQSQPGIPG…DKGDKGEDCN (71 aa)) is disordered. Residues 57 to 114 (GIPGVPGTNGSEGLKGDPGPQGPPGIRGPDGIRGEAGPKGDKGDQGDKGDKGDKGDKG) form the Collagen-like domain. Positions 86 to 116 (DGIRGEAGPKGDKGDQGDKGDKGDKGDKGED) are enriched in basic and acidic residues. Positions 121–339 (DCLPTEVRNC…YADMKIRPQK (219 aa)) constitute a Fibrinogen C-terminal domain. 2 cysteine pairs are disulfide-bonded: C130–C158 and C282–C295.

This sequence belongs to the ficolin lectin family. Veficolin subfamily. Hydroxylated, possibly at Pro-80. In terms of tissue distribution, expressed by the venom duct.

It is found in the secreted. Its function is as follows. Initiates complement activation and/or interferes in platelet aggregation and/or blood coagulation. The chain is Ryncolin-4 from Cerberus rynchops (Dog-faced water snake).